We begin with the raw amino-acid sequence, 142 residues long: Large ribosomal subunit protein uL11 (142 aa).

This sequence belongs to the universal ribosomal protein uL11 family. In terms of assembly, part of the ribosomal stalk of the 50S ribosomal subunit. Interacts with L10 and the large rRNA to form the base of the stalk. L10 forms an elongated spine to which L12 dimers bind in a sequential fashion forming a multimeric L10(L12)X complex. In terms of processing, one or more lysine residues are methylated.

Forms part of the ribosomal stalk which helps the ribosome interact with GTP-bound translation factors. The sequence is that of Large ribosomal subunit protein uL11 from Klebsiella pneumoniae (strain 342).